We begin with the raw amino-acid sequence, 441 residues long: MTVSSGDPDVHASRSAQLFERADLVIPGGVNSPVRAFHSVGGTPRFIKEASGYTLTDVDGNDYVDLICSWGPMILGHAHPAVVEAVQKAAATGLSFGAPTEGEIELAEEIVGRVAPVEKVRLVNSGTEATMSAVRLARGFTGRTKVLKFSGCYHGHVDALLADAGSGLATFGLPTSPGVTGAQAEDTIVVPYNDLDAVAQAFAANEGRIACVITEAAAGNMGAVAPQPGFNEGLRKLTSDNGALLIMDEVMTGFRVSSAGWFGLDGVAGDLYTFGKVMSGGLPAAAFGGRADVMAHLAPAGPVYQAGTLSGNPVAVAAGLASLRAADQGVYDALERNSATLRTLLSDALTAESVPHRVQTAGTMLSVFFSEDPVTNYAEAKAAQTWRFPAFFHGLLSRGVYPPPSAFEAWFVSAAMDDRAFSIIADALPHAAKAAAAAVQP.

The residue at position 276 (lysine 276) is an N6-(pyridoxal phosphate)lysine.

It belongs to the class-III pyridoxal-phosphate-dependent aminotransferase family. HemL subfamily. In terms of assembly, homodimer. Pyridoxal 5'-phosphate serves as cofactor.

The protein resides in the cytoplasm. The enzyme catalyses (S)-4-amino-5-oxopentanoate = 5-aminolevulinate. It participates in porphyrin-containing compound metabolism; protoporphyrin-IX biosynthesis; 5-aminolevulinate from L-glutamyl-tRNA(Glu): step 2/2. The polypeptide is Glutamate-1-semialdehyde 2,1-aminomutase (Rhodococcus jostii (strain RHA1)).